Consider the following 185-residue polypeptide: Small ribosomal subunit protein bS6 (185 aa).

Positions 115 to 141 are enriched in basic and acidic residues; it reads AAQKAAAEKAEAARLEAEKAAEEEAAK. Residues 115 to 185 are disordered; that stretch reads AAQKAAAEKA…EEPKSDEEDA (71 aa). Over residues 142-169 the composition is skewed to low complexity; that stretch reads AAEAQAKEAPAAEAPAEEAPAAEAPAEA. The segment covering 170 to 185 has biased composition (acidic residues); the sequence is PAEEPAEEPKSDEEDA.

It belongs to the bacterial ribosomal protein bS6 family.

Functionally, binds together with bS18 to 16S ribosomal RNA. The chain is Small ribosomal subunit protein bS6 from Desulfatibacillum aliphaticivorans.